Consider the following 290-residue polypeptide: Chitinase 10 (290 aa).

Residues 1–28 (MAKPTPAPRATPFLLAAVLSIVVVAASG) form the signal peptide. Disulfide bonds link Cys70/Cys132 and Cys144/Cys153. Glu114 acts as the Proton donor in catalysis. Asn193 and Asn234 each carry an N-linked (GlcNAc...) asparagine glycan. Cysteines 252 and 284 form a disulfide.

This sequence belongs to the glycosyl hydrolase 19 family. Chitinase class I subfamily. As to expression, expressed at low levels in roots, leaves and meristems.

The catalysed reaction is Random endo-hydrolysis of N-acetyl-beta-D-glucosaminide (1-&gt;4)-beta-linkages in chitin and chitodextrins.. The chain is Chitinase 10 (Cht10) from Oryza sativa subsp. japonica (Rice).